The sequence spans 860 residues: Leucine--tRNA ligase (860 aa).

A 'HIGH' region motif is present at residues 42–52; that stretch reads PYPSGRLHMGH. The 'KMSKS' region signature appears at 619–623; the sequence is KMSKS. K622 is an ATP binding site.

Belongs to the class-I aminoacyl-tRNA synthetase family.

The protein resides in the cytoplasm. It carries out the reaction tRNA(Leu) + L-leucine + ATP = L-leucyl-tRNA(Leu) + AMP + diphosphate. The chain is Leucine--tRNA ligase from Serratia proteamaculans (strain 568).